A 312-amino-acid chain; its full sequence is Mas-related G-protein coupled receptor member E (312 aa).

The Extracellular segment spans residues 1–20 (MMEPREAGQHVGAANGAQED). The chain crosses the membrane as a helical span at residues 21 to 41 (VAFNLIILSLTEGLGLGGLLG). Residues 42–59 (NGAVLWLLSSNVYRNPFA) are Cytoplasmic-facing. A helical transmembrane segment spans residues 60–80 (IYLLDVACADLIFLGCHMVAI). Residues 81 to 106 (VPDLLQGRLDFPGFVQTSLATLRFFC) are Extracellular-facing. A helical transmembrane segment spans residues 107–127 (YIVGLSLLAAVSVEQCLAALF). The Cytoplasmic portion of the chain corresponds to 128–141 (PAWYSCRRPRHLTT). A helical transmembrane segment spans residues 142-162 (CVCALTWALCLLLHLLLSGAC). Residues 163-176 (TQFFGEPSRHLCRT) lie on the Extracellular side of the membrane. Residues 177–197 (LWLVAAVLLALLCCTMCGASL) traverse the membrane as a helical segment. At 198–217 (MLLLRVERGPQRPPPRGFPG) the chain is on the cytoplasmic side. A helical membrane pass occupies residues 218-238 (LILLTVLLFLFCGLPFGIYWL). The Extracellular segment spans residues 239–241 (SRN). Residues 242-262 (LLWYIPHYFYHFSFLMAAVHC) form a helical membrane-spanning segment. Residues 263–312 (AAKPVVYFCLGSAQGRRLPLRLVLQRALGDEAELGAVRETSRRGLVDIAA) lie on the Cytoplasmic side of the membrane.

Belongs to the G-protein coupled receptor 1 family. Mas subfamily.

The protein localises to the cell membrane. Functionally, orphan receptor. May regulate nociceptor function and/or development, including the sensation or modulation of pain. The protein is Mas-related G-protein coupled receptor member E (MRGPRE) of Homo sapiens (Human).